Consider the following 209-residue polypeptide: Large ribosomal subunit protein uL3 (209 aa).

The disordered stretch occupies residues T133–G153. Residue Q150 is modified to N5-methylglutamine.

The protein belongs to the universal ribosomal protein uL3 family. In terms of assembly, part of the 50S ribosomal subunit. Forms a cluster with proteins L14 and L19. Post-translationally, methylated by PrmB.

One of the primary rRNA binding proteins, it binds directly near the 3'-end of the 23S rRNA, where it nucleates assembly of the 50S subunit. The protein is Large ribosomal subunit protein uL3 of Pectobacterium carotovorum subsp. carotovorum (strain PC1).